A 472-amino-acid polypeptide reads, in one-letter code: Pyridine nucleotide-disulfide oxidoreductase domain-containing protein 1 (472 aa).

The protein belongs to the class-I pyridine nucleotide-disulfide oxidoreductase family. PYROXD1 subfamily. Requires FAD as cofactor.

Its function is as follows. Probable oxidoreductase. This is Pyridine nucleotide-disulfide oxidoreductase domain-containing protein 1 from Drosophila melanogaster (Fruit fly).